A 338-amino-acid chain; its full sequence is Phosphatidate cytidylyltransferase, mitochondrial (338 aa).

The protein belongs to the TAM41 family. It depends on Mg(2+) as a cofactor.

Its subcellular location is the mitochondrion inner membrane. The catalysed reaction is a 1,2-diacyl-sn-glycero-3-phosphate + CTP + H(+) = a CDP-1,2-diacyl-sn-glycerol + diphosphate. It participates in phospholipid metabolism; CDP-diacylglycerol biosynthesis; CDP-diacylglycerol from sn-glycerol 3-phosphate: step 3/3. Catalyzes the conversion of phosphatidic acid (PA) to CDP-diacylglycerol (CDP-DAG), an essential intermediate in the synthesis of phosphatidylglycerol, cardiolipin and phosphatidylinositol. This Danio rerio (Zebrafish) protein is Phosphatidate cytidylyltransferase, mitochondrial (tamm41).